The primary structure comprises 20 residues: Cathepsin L-like cysteine proteinase (20 aa).

This sequence belongs to the peptidase C1 family.

It localises to the lysosome. In terms of biological role, thiol protease. This Fasciola hepatica (Liver fluke) protein is Cathepsin L-like cysteine proteinase.